A 338-amino-acid polypeptide reads, in one-letter code: DNA-directed RNA polymerase subunit alpha (338 aa).

The interval 1-234 (MIERNWNELI…DQLQIFITFE (234 aa)) is alpha N-terminal domain (alpha-NTD). Residues 250 to 338 (FNPALLKKVD…DLAKKFEDQI (89 aa)) form an alpha C-terminal domain (alpha-CTD) region.

The protein belongs to the RNA polymerase alpha chain family. As to quaternary structure, homodimer. The RNAP catalytic core consists of 2 alpha, 1 beta, 1 beta' and 1 omega subunit. When a sigma factor is associated with the core the holoenzyme is formed, which can initiate transcription.

It catalyses the reaction RNA(n) + a ribonucleoside 5'-triphosphate = RNA(n+1) + diphosphate. Functionally, DNA-dependent RNA polymerase catalyzes the transcription of DNA into RNA using the four ribonucleoside triphosphates as substrates. The chain is DNA-directed RNA polymerase subunit alpha from Caulobacter sp. (strain K31).